A 113-amino-acid polypeptide reads, in one-letter code: Large ribosomal subunit protein uL24 (113 aa).

The protein belongs to the universal ribosomal protein uL24 family. Part of the 50S ribosomal subunit.

Functionally, one of two assembly initiator proteins, it binds directly to the 5'-end of the 23S rRNA, where it nucleates assembly of the 50S subunit. One of the proteins that surrounds the polypeptide exit tunnel on the outside of the subunit. In Fusobacterium nucleatum subsp. nucleatum (strain ATCC 25586 / DSM 15643 / BCRC 10681 / CIP 101130 / JCM 8532 / KCTC 2640 / LMG 13131 / VPI 4355), this protein is Large ribosomal subunit protein uL24 (rplX).